A 438-amino-acid chain; its full sequence is MPKIVVVGAVAGGATCASQIRRLDKESDIIIFEKDRDMSFANCALPYVIGEVVEDRKYALAYTPEKFYDRKQITVKTYHEVIAINDERQTVTVLNRKTNEQFEESYDKLILSPGASANSLGFESDITFTLRNLEDTDAIDQFIKANQVDKVLVIGAGYVSLEVLENLYERGLHPTLIHRSDKINKLMDADMNQPILDELDKREIPYRLNEEIDAINGNEITFKSGKVEHYDMIIEGVGTHPNSKFIESSNIKLDRKGFIPVNDKFETNVPNIYAIGDIATSHYRHVDLPASVPLAWGAHRAASIVAEQIAGNDTIEFKGFLGNNIVKFFDYTFASVGVKPNELKQFDYKMVEVTQGAHANYYPGNSPLHLRVYYDTSNRQILRAAAVGKEGADKRIDVLSMAMMNQLTVDELTEFEVAYAPPYSHPKDLINMIGYKAK.

G8–E33 contacts FAD. Substrate-binding residues include T15, Q19, R22, S39, and N42. Residue C43 is the Nucleophile of the active site. The Redox-active role is filled by C43. K71 lines the substrate pocket. An NADP(+)-binding site is contributed by V151–N166. T267–D277 lines the FAD pocket. H299 contacts substrate. Y419 is an FAD binding site. Residue K427 participates in substrate binding.

Belongs to the class-III pyridine nucleotide-disulfide oxidoreductase family. Homodimer. Requires FAD as cofactor.

It carries out the reaction NADP(+) + 2 CoA = CoA-disulfide + NADPH + H(+). Catalyzes specifically the NADPH-dependent reduction of coenzyme A disulfide. The sequence is that of Coenzyme A disulfide reductase from Staphylococcus aureus (strain Mu3 / ATCC 700698).